The chain runs to 216 residues: Imidazoleglycerol-phosphate dehydratase (216 aa).

This sequence belongs to the imidazoleglycerol-phosphate dehydratase family.

It is found in the cytoplasm. The catalysed reaction is D-erythro-1-(imidazol-4-yl)glycerol 3-phosphate = 3-(imidazol-4-yl)-2-oxopropyl phosphate + H2O. Its pathway is amino-acid biosynthesis; L-histidine biosynthesis; L-histidine from 5-phospho-alpha-D-ribose 1-diphosphate: step 6/9. This is Imidazoleglycerol-phosphate dehydratase from Nocardia farcinica (strain IFM 10152).